The chain runs to 407 residues: Putative two-component response regulator ARR19 (407 aa).

The Response regulatory domain maps to 35-150; the sequence is NVLVVDTNFT…VMANIWQHIV (116 aa). Position 86 is a 4-aspartylphosphate (aspartate 86). The short motif at 214–217 is the Nuclear localization signal element; sequence RKPR. Positions 217-271 form a DNA-binding region, myb-like GARP; the sequence is RMTWTEELHQKFLEAIEIIGGIEKANPKVLVECLQEMRIEGITRSNVASHLQKHR.

This sequence belongs to the ARR family. Type-B subfamily. As to quaternary structure, binds the target DNA as a monomer. Two-component system major event consists of a His-to-Asp phosphorelay between a sensor histidine kinase (HK) and a response regulator (RR). In plants, the His-to-Asp phosphorelay involves an additional intermediate named Histidine-containing phosphotransfer protein (HPt). This multistep phosphorelay consists of a His-Asp-His-Asp sequential transfer of a phosphate group between first a His and an Asp of the HK protein, followed by the transfer to a conserved His of the HPt protein and finally the transfer to an Asp in the receiver domain of the RR protein. As to expression, detected in trichomes and siliques.

The protein resides in the nucleus. In terms of biological role, putative transcriptional activator that binds specifically to the DNA sequence 5'-[AG]GATT-3'. Functions as a response regulator involved in His-to-Asp phosphorelay signal transduction system. Phosphorylation of the Asp residue in the receiver domain activates the ability of the protein to promote the transcription of target genes. Could directly activate some type-A response regulators in response to cytokinins. This chain is Putative two-component response regulator ARR19 (ARR19), found in Arabidopsis thaliana (Mouse-ear cress).